The sequence spans 142 residues: Large ribosomal subunit protein bL19 (142 aa).

This sequence belongs to the bacterial ribosomal protein bL19 family.

This protein is located at the 30S-50S ribosomal subunit interface and may play a role in the structure and function of the aminoacyl-tRNA binding site. In Rickettsia bellii (strain OSU 85-389), this protein is Large ribosomal subunit protein bL19.